Consider the following 248-residue polypeptide: Sugar fermentation stimulation protein homolog (248 aa).

It belongs to the SfsA family.

This Methylorubrum extorquens (strain PA1) (Methylobacterium extorquens) protein is Sugar fermentation stimulation protein homolog.